The sequence spans 155 residues: DNA-directed RNA polymerases I, II, and III subunit RPABC2 (155 aa).

The span at 1–19 (MSDYEEAFNDGNENFEDFD) shows a compositional bias: acidic residues. The segment at 1–57 (MSDYEEAFNDGNENFEDFDVEHFSDEETYEEKPQFKDGETTDANGKTIVTGGNGPED) is disordered. Basic and acidic residues predominate over residues 20 to 39 (VEHFSDEETYEEKPQFKDGE). The residue at position 24 (Ser24) is a Phosphoserine. The interval 111 to 132 (LEGETDPLRIAMKELAEKKIPL) is leucine-zipper.

It belongs to the archaeal Rpo6/eukaryotic RPB6 RNA polymerase subunit family. Component of the RNA polymerase I (Pol I), RNA polymerase II (Pol II) and RNA polymerase III (Pol III) complexes. Component of the RNA polymerase I (Pol I) complex consisting of 14 subunits: RPA135, RPA190, RPC40, RPA14, RPB5, RPO26, RPA43, RPB8, RPA12, RPB10, RPC19, RPC10, RPA49 and RPA34. The complex is composed of a horseshoe-shaped core containing ten subunits (RPA135, RPA190, RPB5, RPO26, RPB8, RPB10, RPC10, RPA12, RPC19 and RPC40) where RPA135 and RPA190 form the DNA-binding cleft. Outside of the core, RPA14 and RPA43 form the stalk that mediates interactions with transcription initiation factors and newly synthesized RNA. Component of the RNA polymerase II (Pol II) complex consisting of 12 subunits: RPO21, RPB2, RPB3, RPB4, RPB5, RPO26, RPB7, RPB8, RPB9, RPB10 and RPC10. Component of the RNA polymerase III (Pol III) complex consisting of 17 subunits.

The protein localises to the cytoplasm. It localises to the nucleus. Its function is as follows. DNA-dependent RNA polymerases catalyze the transcription of DNA into RNA using the four ribonucleoside triphosphates as substrates. Common component of RNA polymerases I, II and III which synthesize ribosomal RNA precursors, mRNA precursors and many functional non-coding RNAs, and small RNAs, such as 5S rRNA and tRNAs, respectively. Pol II is the central component of the basal RNA polymerase II transcription machinery. RNA polymerases are composed of mobile elements that move relative to each other. In Pol II, RPB6 is part of the clamp element and together with parts of RPB1 and RPB2 forms a pocket to which the RPB4-RPB7 subcomplex binds. This Saccharomyces cerevisiae (strain ATCC 204508 / S288c) (Baker's yeast) protein is DNA-directed RNA polymerases I, II, and III subunit RPABC2 (RPO26).